Consider the following 719-residue polypeptide: Calpain-12 (719 aa).

The 297-residue stretch at 45–341 (LFRDPYFPAG…FDTVQICSLS (297 aa)) folds into the Calpain catalytic domain. Active-site residues include Cys105, His259, and Asn283. Residues 342–540 (PEVLGPSPEG…DDVISADLQS (199 aa)) are domain III. The span at 393–402 (DEEDDEDEEG) shows a compositional bias: acidic residues. A disordered region spans residues 393 to 418 (DEEDDEDEEGPWGGWGAAGARGPARG). The segment at 541-719 (LQGPYLPLEL…RQWMEVATFS (179 aa)) is domain IV. Positions 620 to 655 (GYLLEWQAIFNKFDEDTSGTMNSYELRLALNAAGFH) constitute an EF-hand domain. Ca(2+) is bound by residues Asp633, Asp635, Ser637, Thr639, and Glu644.

It belongs to the peptidase C2 family.

Its function is as follows. Calcium-regulated non-lysosomal thiol-protease. This chain is Calpain-12 (CAPN12), found in Homo sapiens (Human).